The following is a 452-amino-acid chain: UDP-N-acetylmuramoyl-tripeptide--D-alanyl-D-alanine ligase (452 aa).

113–119 contributes to the ATP binding site; that stretch reads GSNGKTT.

Belongs to the MurCDEF family. MurF subfamily.

The protein localises to the cytoplasm. The catalysed reaction is UDP-N-acetyl-alpha-D-muramoyl-L-alanyl-gamma-D-glutamyl-L-lysine + D-alanyl-D-alanine + ATP = UDP-N-acetyl-alpha-D-muramoyl-L-alanyl-gamma-D-glutamyl-L-lysyl-D-alanyl-D-alanine + ADP + phosphate + H(+). Its pathway is cell wall biogenesis; peptidoglycan biosynthesis. In terms of biological role, involved in cell wall formation. Catalyzes the final step in the synthesis of UDP-N-acetylmuramoyl-pentapeptide, the precursor of murein. Catalyzes the addition of D-alanyl-D-alanine to UDP-MurNAc-L-alanyl-gamma-D-glutamyl-L-lysine. In vitro, can also use the mesodiaminopimelic acid-containing form of UDP-MurNAc-tripeptide, with the same efficiency, revealing that the discrimination for the amino acid residue at the third position of the peptide in the peptidoglycans is entirely supported by MurE. This Staphylococcus aureus (strain NCTC 8325 / PS 47) protein is UDP-N-acetylmuramoyl-tripeptide--D-alanyl-D-alanine ligase.